The primary structure comprises 388 residues: tRNA (guanine(26)-N(2))-dimethyltransferase (388 aa).

Residues 4–383 (RTIVEGTTKI…APIAEIKKII (380 aa)) form the Trm1 methyltransferase domain. The S-adenosyl-L-methionine site is built by arginine 41, arginine 78, aspartate 94, and alanine 123. Zn(2+) is bound by residues cysteine 251, cysteine 254, cysteine 271, and cysteine 274.

Belongs to the class I-like SAM-binding methyltransferase superfamily. Trm1 family.

It catalyses the reaction guanosine(26) in tRNA + 2 S-adenosyl-L-methionine = N(2)-dimethylguanosine(26) in tRNA + 2 S-adenosyl-L-homocysteine + 2 H(+). Dimethylates a single guanine residue at position 26 of a number of tRNAs using S-adenosyl-L-methionine as donor of the methyl groups. The chain is tRNA (guanine(26)-N(2))-dimethyltransferase from Methanosarcina mazei (strain ATCC BAA-159 / DSM 3647 / Goe1 / Go1 / JCM 11833 / OCM 88) (Methanosarcina frisia).